The primary structure comprises 192 residues: Probable thymidylate kinase (192 aa).

Residue 8-15 (GIDGSGKS) participates in ATP binding.

It belongs to the thymidylate kinase family.

The enzyme catalyses dTMP + ATP = dTDP + ADP. The protein is Probable thymidylate kinase of Pyrobaculum aerophilum (strain ATCC 51768 / DSM 7523 / JCM 9630 / CIP 104966 / NBRC 100827 / IM2).